Consider the following 211-residue polypeptide: Arginine exporter protein ArgO (211 aa).

Residues 1 to 38 (MFSYYFQGLALGAAMILPLGPQNAFVMNQGIRRQYHIM) lie on the Cytoplasmic side of the membrane. A helical transmembrane segment spans residues 39-58 (IALLCAISDLVLICAGIFGG). Over 59-63 (SALLM) the chain is Periplasmic. A helical membrane pass occupies residues 64-91 (QSPWLLALVTWGGVAFLLWYGFGAFKTA). Topologically, residues 92–102 (MSSNIELASAE) are cytoplasmic. Residues 103–130 (VMKQGRWKIIATMLAVTWLNPHVYLDTF) form a helical membrane-spanning segment. Residues 131–140 (VVLGSLGGQL) are Periplasmic-facing. The chain crosses the membrane as a helical span at residues 141–170 (DVEPKRWFALGTISASFLWFFGLALLAAWL). Topologically, residues 171-173 (APR) are cytoplasmic. Residues 174-200 (LRTAKAQRIINLVVGCVMWFIALQLAR) form a helical membrane-spanning segment. The Periplasmic segment spans residues 201–211 (DGIAHAQALFS).

It belongs to the LysE/ArgO transporter (TC 2.A.75) family. In terms of assembly, monomer.

The protein localises to the cell inner membrane. It carries out the reaction L-arginine(in) = L-arginine(out). Its function is as follows. Involved in the export of arginine. Important to control the intracellular level of arginine and the correct balance between arginine and lysine. May also be involved in the export of canavanine (a plant-derived antimetabolite). In Escherichia coli (strain K12), this protein is Arginine exporter protein ArgO.